Consider the following 277-residue polypeptide: Diaminopimelate epimerase (277 aa).

The substrate site is built by Asn11 and Asn62. Catalysis depends on Cys71, which acts as the Proton donor. Residues 72–73 (GN), Asn160, Asn193, and 211–212 (ER) each bind substrate. The active-site Proton acceptor is the Cys220. 221–222 (GT) lines the substrate pocket.

The protein belongs to the diaminopimelate epimerase family. Homodimer.

It is found in the cytoplasm. The catalysed reaction is (2S,6S)-2,6-diaminopimelate = meso-2,6-diaminopimelate. It functions in the pathway amino-acid biosynthesis; L-lysine biosynthesis via DAP pathway; DL-2,6-diaminopimelate from LL-2,6-diaminopimelate: step 1/1. In terms of biological role, catalyzes the stereoinversion of LL-2,6-diaminopimelate (L,L-DAP) to meso-diaminopimelate (meso-DAP), a precursor of L-lysine. In Methanococcus maripaludis (strain C6 / ATCC BAA-1332), this protein is Diaminopimelate epimerase.